The chain runs to 614 residues: UvrABC system protein C (614 aa).

A GIY-YIG domain is found at 14–91 (TSPGCYIHKD…IKENKPKYNI (78 aa)). The 36-residue stretch at 196–231 (DKIIDDLKSKMAVAAQSMEFERAAEYRDLIQAIGTL) folds into the UVR domain. Positions 595–614 (LSQVAEERVDYQTEGNHNEP) are disordered. Positions 599 to 614 (AEERVDYQTEGNHNEP) are enriched in basic and acidic residues.

The protein belongs to the UvrC family. In terms of assembly, interacts with UvrB in an incision complex.

It is found in the cytoplasm. The UvrABC repair system catalyzes the recognition and processing of DNA lesions. UvrC both incises the 5' and 3' sides of the lesion. The N-terminal half is responsible for the 3' incision and the C-terminal half is responsible for the 5' incision. The protein is UvrABC system protein C of Streptococcus pneumoniae serotype 2 (strain D39 / NCTC 7466).